Reading from the N-terminus, the 370-residue chain is Versatile peroxidase VPS1 (370 aa).

Residues 1–20 form the signal peptide; the sequence is MAFAKLSAFVLALGATVALG. Positions 21–31 are excised as a propeptide; sequence ESPTHRCLNKR. 4 disulfide bridges follow: Cys34-Cys46, Cys45-Cys315, Cys65-Cys151, and Cys279-Cys344. The Mn(2+) site is built by Glu67 and Glu71. The Proton acceptor role is filled by His78. Positions 79, 97, 99, and 101 each coordinate Ca(2+). N-linked (GlcNAc...) asparagine glycosylation is present at Asn133. The Tryptophan radical intermediate role is filled by Trp201. A heme b-binding site is contributed by His206. A Ca(2+)-binding site is contributed by Thr207. Position 210 to 214 (210 to 214) interacts with heme b; the sequence is AADHV. Mn(2+) is bound at residue Asp212. Residues Asp224, Thr226, Thr229, and Asp231 each coordinate Ca(2+).

Belongs to the peroxidase family. Ligninase subfamily. It depends on heme b as a cofactor. The cofactor is Ca(2+).

It localises to the secreted. The enzyme catalyses 1-(4-hydroxy-3-methoxyphenyl)-2-(2-methoxyphenoxy)propane-1,3-diol + H2O2 = guaiacol + vanillin + glycolaldehyde + H2O. It catalyses the reaction 2 Mn(2+) + H2O2 + 2 H(+) = 2 Mn(3+) + 2 H2O. Its function is as follows. A versatile ligninolytic peroxidase that combines the substrate specificity characteristics of the two other ligninolytic peroxidases, manganese peroxidase and lignin peroxidase. In Pleurotus eryngii (Boletus of the steppes), this protein is Versatile peroxidase VPS1 (vps1).